We begin with the raw amino-acid sequence, 696 residues long: DNA ligase (696 aa).

NAD(+) contacts are provided by residues 36–40, 85–86, and E124; these read DAVYD and SL. Catalysis depends on K126, which acts as the N6-AMP-lysine intermediate. NAD(+) contacts are provided by R147, E184, K308, and K332. C426, C429, C444, and C449 together coordinate Zn(2+). A BRCT domain is found at 618-696; that stretch reads QRTVSLQGQT…EEELLKLLAS (79 aa).

The protein belongs to the NAD-dependent DNA ligase family. LigA subfamily. Mg(2+) is required as a cofactor. Requires Mn(2+) as cofactor.

The catalysed reaction is NAD(+) + (deoxyribonucleotide)n-3'-hydroxyl + 5'-phospho-(deoxyribonucleotide)m = (deoxyribonucleotide)n+m + AMP + beta-nicotinamide D-nucleotide.. In terms of biological role, DNA ligase that catalyzes the formation of phosphodiester linkages between 5'-phosphoryl and 3'-hydroxyl groups in double-stranded DNA using NAD as a coenzyme and as the energy source for the reaction. It is essential for DNA replication and repair of damaged DNA. The protein is DNA ligase of Prochlorococcus marinus (strain MIT 9303).